Reading from the N-terminus, the 590-residue chain is MMRSHYCGVLNRTHVGEQVTLSGWVHRVRNLGRFIFMQIRDREGIVQVFFDEKDEALFKQASALRAEACVQIKGEVIARDTSQINKEMATGEIEVLVKELVVYNNSEVLPLDFNQNNTEEQRLKYRYLDLRRPEMAERLKTRAKITSFVRRYMDDNGFLDIETPMLTKATPEGARDYLVPSRVHKGKFYALPQSPQLFKQLLMMSGFDRYYQIAKCFRDEDLRADRQPEFTQIDVETTFMTAPEVRAMMEKMIRGLWLDRLNVDLGEFPQMTFAEAMRRYGSDKPDLRNPLELVDVADILKDVEFKVFSGPANDPEGRVAVIRVPNGAEITRKQIDEYTQFVGNYGAKGLAWAKVNDVNAGLEGLQSPIAKFLTDDVVKALLARVNAQNGDIIFFGADSEKVVTDAMGALRLKVGRDLGLTDLTAWKPLWVVDFPMFEKDDEGNWSAMHHPFTAPKDLSPEELVQNPKGAVANAYDMVINGYEVGGGSVRIFDPKMQQTVFGILGINEEEQKEKFGFLLDALKFGTPPHAGLAFGLDRLTMLITGTENIRDVIAFPKTTAAACLMTDAPSFGNPKALAELAIQTTVEKES.

Glu-172 is a binding site for L-aspartate. The segment at 196–199 (QLFK) is aspartate. Arg-218 is a binding site for L-aspartate. Residues 218-220 (RDE) and Gln-227 each bind ATP. His-449 serves as a coordination point for L-aspartate. Glu-483 provides a ligand contact to ATP. Arg-490 lines the L-aspartate pocket. Residue 535–538 (GLDR) coordinates ATP.

The protein belongs to the class-II aminoacyl-tRNA synthetase family. Type 1 subfamily. Homodimer.

The protein localises to the cytoplasm. It carries out the reaction tRNA(Asp) + L-aspartate + ATP = L-aspartyl-tRNA(Asp) + AMP + diphosphate. Functionally, catalyzes the attachment of L-aspartate to tRNA(Asp) in a two-step reaction: L-aspartate is first activated by ATP to form Asp-AMP and then transferred to the acceptor end of tRNA(Asp). The protein is Aspartate--tRNA ligase of Glaesserella parasuis serovar 5 (strain SH0165) (Haemophilus parasuis).